Here is an 86-residue protein sequence, read N- to C-terminus: Large ribosomal subunit protein bL27 (86 aa).

Residues 1-23 (MAHKKAGGSTRNGRDSESKRLGV) are disordered.

Belongs to the bacterial ribosomal protein bL27 family.

The polypeptide is Large ribosomal subunit protein bL27 (Alkalilimnicola ehrlichii (strain ATCC BAA-1101 / DSM 17681 / MLHE-1)).